The following is a 511-amino-acid chain: DNA nucleotidylexotransferase (511 aa).

A disordered region spans residues 1 to 26 (MDPLQTAHAGPRKKRPRQTGASMAST). Positions 11–17 (PRKKRPR) match the Nuclear localization signal motif. The 98-residue stretch at 27–124 (PQDVRFQDLV…KPVETTGKHQ (98 aa)) folds into the BRCT domain. Ser134 carries the post-translational modification Phosphoserine. The segment at 151–511 (SQYACQRRTT…DYIEPSERNA (361 aa)) is mediates interaction with DNTTIP2. Positions 258–262 (VGLKT) are involved in DNA binding. A 2'-deoxyribonucleoside 5'-triphosphate contacts are provided by residues 333 to 338 (GFRRGK) and 342 to 345 (HDVD). Residues Asp343, Asp345, and Asp435 each coordinate Mg(2+). A 2'-deoxyribonucleoside 5'-triphosphate is bound at residue 450–451 (GW).

This sequence belongs to the DNA polymerase type-X family. In terms of assembly, interacts with PRP19 and DNTTIP1. Forms a ternary complex with DNTTIP2 and core histone. Released from this complex by PCNA. Interacts with TRERF1. Mg(2+) serves as cofactor.

The protein localises to the nucleus. It catalyses the reaction DNA(n) + a 2'-deoxyribonucleoside 5'-triphosphate = DNA(n+1) + diphosphate. Its function is as follows. Template-independent DNA polymerase which catalyzes the random addition of deoxynucleoside 5'-triphosphate to the 3'-end of a DNA initiator. One of the in vivo functions of this enzyme is the addition of nucleotides at the junction (N region) of rearranged Ig heavy chain and T-cell receptor gene segments during the maturation of B- and T-cells. The chain is DNA nucleotidylexotransferase (DNTT) from Eulemur macaco (Black lemur).